The sequence spans 396 residues: DNA excision repair protein ERCC-8 (396 aa).

WD repeat units lie at residues 33–73, 88–129, 133–173, 177–216, 235–274, 281–321, and 325–363; these read NKDR…LYDL, CSIG…VWDT, QTAD…LCDL, SCSH…LWDV, QAVE…LWNS, LVNY…VYTV, and EQIT…AWVP. Positions 371–396 are disordered; it reads DDDETTTKSQLNPAFEDAWSSSDEEG. 3 positions are modified to phosphoserine: Ser-390, Ser-391, and Ser-392.

As to quaternary structure, part of the CSA complex (also named DCX(ERCC8) complex), a DCX E3 ubiquitin-protein ligase complex containing ERCC8, RBX1, DDB1 and CUL4A; the CSA complex interacts with RNA polymerase II; upon UV irradiation it interacts with the COP9 signalosome and preferentially with the hyperphosphorylated form of RNA polymerase II. Interacts with ERCC6/CSB (via CIM motif); promoting recruitment to lesion-stalled RNA polymerase II (Pol II). Interacts with KIAA1530/UVSSA. Interacts with a subunit of RNA polymerase II TFIIH.

It is found in the nucleus. The protein localises to the chromosome. Its subcellular location is the nucleus matrix. Its pathway is protein modification; protein ubiquitination. In terms of biological role, substrate-recognition component of the CSA complex, a DCX (DDB1-CUL4-X-box) E3 ubiquitin-protein ligase complex, involved in transcription-coupled nucleotide excision repair (TC-NER), a process during which RNA polymerase II-blocking lesions are rapidly removed from the transcribed strand of active genes. Following recruitment to lesion-stalled RNA polymerase II (Pol II), the CSA complex mediates ubiquitination of Pol II subunit POLR2A/RPB1 at 'Lys-1268', a critical TC-NER checkpoint, governing RNA Pol II stability and initiating DNA damage excision by TFIIH recruitment. The CSA complex also promotes the ubiquitination and subsequent proteasomal degradation of ERCC6/CSB in a UV-dependent manner; ERCC6 degradation is essential for the recovery of RNA synthesis after transcription-coupled repair. Also plays a role in DNA double-strand breaks (DSSBs) repair by non-homologous end joining (NHEJ). The protein is DNA excision repair protein ERCC-8 of Homo sapiens (Human).